Consider the following 190-residue polypeptide: Threonylcarbamoyl-AMP synthase (190 aa).

The 184-residue stretch at 7–190 (IGSIAAAVDL…ALTGELFRQG (184 aa)) folds into the YrdC-like domain.

Belongs to the SUA5 family. TsaC subfamily.

The protein localises to the cytoplasm. The enzyme catalyses L-threonine + hydrogencarbonate + ATP = L-threonylcarbamoyladenylate + diphosphate + H2O. Required for the formation of a threonylcarbamoyl group on adenosine at position 37 (t(6)A37) in tRNAs that read codons beginning with adenine. Catalyzes the conversion of L-threonine, HCO(3)(-)/CO(2) and ATP to give threonylcarbamoyl-AMP (TC-AMP) as the acyladenylate intermediate, with the release of diphosphate. This is Threonylcarbamoyl-AMP synthase from Salmonella typhimurium (strain LT2 / SGSC1412 / ATCC 700720).